We begin with the raw amino-acid sequence, 442 residues long: 4-alpha-glucanotransferase (442 aa).

Residues Asp13, Asn15, Asp17, Val19, and Asp21 each contribute to the Ca(2+) site. Asp186 functions as the Nucleophile in the catalytic mechanism. Glu216 functions as the Proton donor in the catalytic mechanism.

It belongs to the glycosyl hydrolase 13 family. In terms of assembly, monomer. Requires Ca(2+) as cofactor.

Its subcellular location is the cytoplasm. It carries out the reaction Transfers a segment of a (1-&gt;4)-alpha-D-glucan to a new position in an acceptor, which may be glucose or a (1-&gt;4)-alpha-D-glucan.. Functionally, hydrolyzes the 1,4-alpha-glycoside bonds in oligomeric and polymeric 1,4-alpha-glucans and transfers oligosaccharides (maltotriose being the shortest one) to acceptor maltodextrins. This is 4-alpha-glucanotransferase (mgtA) from Thermotoga neapolitana.